Consider the following 256-residue polypeptide: 1-(5-phosphoribosyl)-5-[(5-phosphoribosylamino)methylideneamino] imidazole-4-carboxamide isomerase (256 aa).

The Proton acceptor role is filled by Asp8. Residue Asp130 is the Proton donor of the active site.

It belongs to the HisA/HisF family.

It localises to the cytoplasm. The catalysed reaction is 1-(5-phospho-beta-D-ribosyl)-5-[(5-phospho-beta-D-ribosylamino)methylideneamino]imidazole-4-carboxamide = 5-[(5-phospho-1-deoxy-D-ribulos-1-ylimino)methylamino]-1-(5-phospho-beta-D-ribosyl)imidazole-4-carboxamide. It functions in the pathway amino-acid biosynthesis; L-histidine biosynthesis; L-histidine from 5-phospho-alpha-D-ribose 1-diphosphate: step 4/9. This is 1-(5-phosphoribosyl)-5-[(5-phosphoribosylamino)methylideneamino] imidazole-4-carboxamide isomerase from Pelodictyon phaeoclathratiforme (strain DSM 5477 / BU-1).